Consider the following 388-residue polypeptide: Phosphopentomutase (388 aa).

Residues Asp11, Asp283, His288, Asp324, His325, and His336 each coordinate Mn(2+).

The protein belongs to the phosphopentomutase family. Mn(2+) serves as cofactor.

The protein resides in the cytoplasm. The catalysed reaction is 2-deoxy-alpha-D-ribose 1-phosphate = 2-deoxy-D-ribose 5-phosphate. The enzyme catalyses alpha-D-ribose 1-phosphate = D-ribose 5-phosphate. It functions in the pathway carbohydrate degradation; 2-deoxy-D-ribose 1-phosphate degradation; D-glyceraldehyde 3-phosphate and acetaldehyde from 2-deoxy-alpha-D-ribose 1-phosphate: step 1/2. Functionally, isomerase that catalyzes the conversion of deoxy-ribose 1-phosphate (dRib-1-P) and ribose 1-phosphate (Rib-1-P) to deoxy-ribose 5-phosphate (dRib-5-P) and ribose 5-phosphate (Rib-5-P), respectively. This chain is Phosphopentomutase, found in Enterococcus faecalis (strain ATCC 700802 / V583).